We begin with the raw amino-acid sequence, 681 residues long: Methionine--tRNA ligase (681 aa).

A 'HIGH' region motif is present at residues 12-22 (PYANGSIHLGH). 4 residues coordinate Zn(2+): C143, C146, C156, and C159. The short motif at 327-331 (KMSKS) is the 'KMSKS' region element. Residue K330 coordinates ATP. The segment covering 545 to 557 (FEKSNPEKAKQDP) has biased composition (basic and acidic residues). Positions 545 to 566 (FEKSNPEKAKQDPSKSNTNEVK) are disordered. The tRNA-binding domain maps to 580–681 (ELSKVELRVG…RDASPGDLLK (102 aa)).

Belongs to the class-I aminoacyl-tRNA synthetase family. MetG type 1 subfamily. In terms of assembly, homodimer. The cofactor is Zn(2+).

The protein resides in the cytoplasm. It catalyses the reaction tRNA(Met) + L-methionine + ATP = L-methionyl-tRNA(Met) + AMP + diphosphate. Is required not only for elongation of protein synthesis but also for the initiation of all mRNA translation through initiator tRNA(fMet) aminoacylation. This Leptospira biflexa serovar Patoc (strain Patoc 1 / ATCC 23582 / Paris) protein is Methionine--tRNA ligase.